A 114-amino-acid chain; its full sequence is MDDLEAIRQKRLAELQQQQSSPQNDAQAAYQQEQAQAERDEQVKAVLRQVMTPEARERLTRLRLSRKELVEQLESQLVMLAQNGRLQTKIDDEKLKVLLTQMQPQKRQTSITRM.

Residues 14 to 37 (ELQQQQSSPQNDAQAAYQQEQAQA) form a disordered region. The segment covering 16 to 35 (QQQQSSPQNDAQAAYQQEQA) has biased composition (low complexity).

It belongs to the PDCD5 family.

The polypeptide is DNA-binding protein Mbur_0117 (Methanococcoides burtonii (strain DSM 6242 / NBRC 107633 / OCM 468 / ACE-M)).